Reading from the N-terminus, the 512-residue chain is ATP synthase subunit alpha (512 aa).

Position 169–176 (169–176) interacts with ATP; that stretch reads GDRQTGKT.

It belongs to the ATPase alpha/beta chains family. In terms of assembly, F-type ATPases have 2 components, CF(1) - the catalytic core - and CF(0) - the membrane proton channel. CF(1) has five subunits: alpha(3), beta(3), gamma(1), delta(1), epsilon(1). CF(0) has three main subunits: a(1), b(2) and c(9-12). The alpha and beta chains form an alternating ring which encloses part of the gamma chain. CF(1) is attached to CF(0) by a central stalk formed by the gamma and epsilon chains, while a peripheral stalk is formed by the delta and b chains.

The protein localises to the cell inner membrane. The enzyme catalyses ATP + H2O + 4 H(+)(in) = ADP + phosphate + 5 H(+)(out). Produces ATP from ADP in the presence of a proton gradient across the membrane. The alpha chain is a regulatory subunit. In Orientia tsutsugamushi (strain Ikeda) (Rickettsia tsutsugamushi), this protein is ATP synthase subunit alpha.